Reading from the N-terminus, the 267-residue chain is 3-methyl-2-oxobutanoate hydroxymethyltransferase (267 aa).

Positions 42 and 86 each coordinate Mg(2+). Residues 42 to 43 (DS), Asp-86, and Lys-116 each bind 3-methyl-2-oxobutanoate. Glu-118 serves as a coordination point for Mg(2+). The active-site Proton acceptor is the Glu-185.

This sequence belongs to the PanB family. As to quaternary structure, homodecamer; pentamer of dimers. The cofactor is Mg(2+).

The protein resides in the cytoplasm. It carries out the reaction 3-methyl-2-oxobutanoate + (6R)-5,10-methylene-5,6,7,8-tetrahydrofolate + H2O = 2-dehydropantoate + (6S)-5,6,7,8-tetrahydrofolate. Its pathway is cofactor biosynthesis; (R)-pantothenate biosynthesis; (R)-pantoate from 3-methyl-2-oxobutanoate: step 1/2. Catalyzes the reversible reaction in which hydroxymethyl group from 5,10-methylenetetrahydrofolate is transferred onto alpha-ketoisovalerate to form ketopantoate. This Parasynechococcus marenigrum (strain WH8102) protein is 3-methyl-2-oxobutanoate hydroxymethyltransferase.